The chain runs to 94 residues: uncharacterized protein (94 aa).

This is an uncharacterized protein from Helicobacter pylori (strain ATCC 700392 / 26695) (Campylobacter pylori).